The sequence spans 376 residues: Enoyl-[acyl-carrier-protein] reductase, mitochondrial (376 aa).

The N-terminal 12 residues, 1-12 (MLRTLRTSQLAR), are a transit peptide targeting the mitochondrion. The Proton donor role is filled by Tyr-79. Residues Asn-160, 183 to 186 (NSGV), 206 to 208 (RDR), 277 to 280 (YGGM), 302 to 304 (YWL), and Lys-368 contribute to the NADP(+) site.

The protein belongs to the zinc-containing alcohol dehydrogenase family. Quinone oxidoreductase subfamily. In terms of assembly, homodimer.

The protein localises to the mitochondrion matrix. It carries out the reaction a 2,3-saturated acyl-[ACP] + NADP(+) = a (2E)-enoyl-[ACP] + NADPH + H(+). Catalyzes the NADPH-dependent reduction of trans-2-enoyl thioesters in mitochondrial fatty acid synthesis (fatty acid synthesis type II). Fatty acid chain elongation in mitochondria uses acyl carrier protein (ACP) as an acyl group carrier, but the enzyme accepts both ACP and CoA thioesters as substrates in vitro. Required for respiration and the maintenance of the mitochondrial compartment. This chain is Enoyl-[acyl-carrier-protein] reductase, mitochondrial (ETR1), found in Yarrowia lipolytica (strain CLIB 122 / E 150) (Yeast).